Reading from the N-terminus, the 91-residue chain is Protein LURE 1.3 (91 aa).

Residues 1-20 form the signal peptide; it reads MKLPFIFLITLLIFVSSCTS. N-linked (GlcNAc...) asparagine glycosylation is present at Asn-24. Disulfide bonds link Cys-59/Cys-76, Cys-62/Cys-83, and Cys-66/Cys-85. The PRK6 binding stretch occupies residues 68 to 88; sequence RRGKYIRTCSFERKLCRCSIS.

The protein belongs to the DEFL family. As to quaternary structure, binds to PRK6 LRRs. Expressed in the pistil. Detected exclusively in the synergid cells.

Its subcellular location is the secreted. Pollen tube attractants guiding pollen tubes to the ovular micropyle. Attracts pollen tubes from both A.thaliana and A.lyrata. This is Protein LURE 1.3 from Arabidopsis thaliana (Mouse-ear cress).